Here is a 230-residue protein sequence, read N- to C-terminus: Urease accessory protein UreG (230 aa).

33-40 (GPVGSGKT) contributes to the GTP binding site.

Belongs to the SIMIBI class G3E GTPase family. UreG subfamily. Homodimer. UreD, UreF and UreG form a complex that acts as a GTP-hydrolysis-dependent molecular chaperone, activating the urease apoprotein by helping to assemble the nickel containing metallocenter of UreC. The UreE protein probably delivers the nickel.

It is found in the cytoplasm. Functionally, facilitates the functional incorporation of the urease nickel metallocenter. This process requires GTP hydrolysis, probably effectuated by UreG. This is Urease accessory protein UreG from Mycobacteroides abscessus (strain ATCC 19977 / DSM 44196 / CCUG 20993 / CIP 104536 / JCM 13569 / NCTC 13031 / TMC 1543 / L948) (Mycobacterium abscessus).